Consider the following 287-residue polypeptide: Pol-RFamide neuropeptides (287 aa).

The N-terminal stretch at M1 to A21 is a signal peptide. The propeptide occupies D22–D52. Position 53 is a pyrrolidone carboxylic acid (Q53). A Phenylalanine amide modification is found at F59. Residues E62–N64 constitute a propeptide that is removed on maturation. Q65 is modified (pyrrolidone carboxylic acid). At F71 the chain carries Phenylalanine amide. Positions E74 to D77 are excised as a propeptide. Pyrrolidone carboxylic acid is present on Q78. At F84 the chain carries Phenylalanine amide. A propeptide spanning residues E87–D90 is cleaved from the precursor. Q91 is subject to Pyrrolidone carboxylic acid. F97 is modified (phenylalanine amide). Residues E100 to D103 constitute a propeptide that is removed on maturation. Residue Q104 is modified to Pyrrolidone carboxylic acid. The residue at position 110 (F110) is a Phenylalanine amide. Positions D113–N116 are excised as a propeptide. The residue at position 117 (Q117) is a Pyrrolidone carboxylic acid. The residue at position 123 (F123) is a Phenylalanine amide. A propeptide spanning residues E126–D129 is cleaved from the precursor. Residue Q130 is modified to Pyrrolidone carboxylic acid. Phenylalanine amide is present on F136. Positions E139–N142 are excised as a propeptide. The residue at position 143 (Q143) is a Pyrrolidone carboxylic acid. Residue F149 is modified to Phenylalanine amide. Residues E152–D168 constitute a propeptide that is removed on maturation. Q169 carries the post-translational modification Pyrrolidone carboxylic acid. F175 bears the Phenylalanine amide mark. Residues E178 to K181 constitute a propeptide that is removed on maturation. Q182 is modified (pyrrolidone carboxylic acid). Residue F188 is modified to Phenylalanine amide. A propeptide spanning residues D192 to N194 is cleaved from the precursor. Q195 is subject to Pyrrolidone carboxylic acid. H201 carries the post-translational modification Histidine amide. Positions E204–D207 are excised as a propeptide. A Pyrrolidone carboxylic acid modification is found at Q208. Phenylalanine amide is present on F214. A propeptide spanning residues Q217–D220 is cleaved from the precursor. Pyrrolidone carboxylic acid is present on Q221. The residue at position 227 (F227) is a Phenylalanine amide. A disordered region spans residues R229–K267. Positions E230–V287 are excised as a propeptide. Residues P238 to P257 show a composition bias toward polar residues.

Belongs to the FARP (FMRFamide related peptide) family. In terms of processing, the N-terminal processing sites of the Pol-RFamide peptides are acidic suggesting that cniderian nervous systems may use a variety of unconventional processing procedures.

It is found in the secreted. Its function is as follows. Has direct action on motoneurons, and effect includes transient inhibition followed by prolonged excitation. This is Pol-RFamide neuropeptides from Polyorchis penicillatus (Hydromedusa).